The following is a 138-amino-acid chain: Cysteine desulfuration protein SufE (138 aa).

C51 functions as the Cysteine persulfide intermediate in the catalytic mechanism.

This sequence belongs to the SufE family. As to quaternary structure, homodimer. Interacts with SufS.

It is found in the cytoplasm. Its pathway is cofactor biosynthesis; iron-sulfur cluster biosynthesis. Functionally, participates in cysteine desulfuration mediated by SufS. Cysteine desulfuration mobilizes sulfur from L-cysteine to yield L-alanine and constitutes an essential step in sulfur metabolism for biosynthesis of a variety of sulfur-containing biomolecules. Functions as a sulfur acceptor for SufS, by mediating the direct transfer of the sulfur atom from the S-sulfanylcysteine of SufS, an intermediate product of cysteine desulfuration process. This Pectobacterium atrosepticum (strain SCRI 1043 / ATCC BAA-672) (Erwinia carotovora subsp. atroseptica) protein is Cysteine desulfuration protein SufE.